The sequence spans 332 residues: 2,3-diketo-L-gulonate reductase (332 aa).

The Proton donor role is filled by His44. NAD(+) is bound by residues 168–174 (ITMVDMS), 224–225 (WK), and 304–306 (GHE).

It belongs to the LDH2/MDH2 oxidoreductase family. DlgD subfamily. Homodimer.

The protein resides in the cytoplasm. The catalysed reaction is 3-dehydro-L-gulonate + NAD(+) = 2,3-dioxo-L-gulonate + NADH + H(+). It catalyses the reaction 3-dehydro-L-gulonate + NADP(+) = 2,3-dioxo-L-gulonate + NADPH + H(+). Catalyzes the reduction of 2,3-diketo-L-gulonate in the presence of NADH, to form 3-keto-L-gulonate. This is 2,3-diketo-L-gulonate reductase from Salmonella paratyphi A (strain ATCC 9150 / SARB42).